Reading from the N-terminus, the 632-residue chain is MQYPKNYDVVVIGGGHAGTEAALAAARMGAQTLLLTHNIETLGQMSCNPAIGGIGKSHLVREIDALGGAMALATDKSGIQFRVLNSRKGAAVRATRAQADRILYKAAIRHTLENQPNLDIFQQAADDILVENGRATAVVTATGIIFNTQTVVLTSGTFLGGVIHIGLESSKGGRAGDQPSIKLADRLRELKLPVGRLKTGTPARIDARSVDFSVMAVQPGDTPLPVMSYMGDVSMHPEQVNCYITHTNARTHDIIRENLDRSPMFSGKIEGVGPRYCPSIEDKIHRFADKDSHQIFIEPEGLTTHELYPNGISTSLPFDVQLEFIHSMKGLENAHITRPGYAIEYDYFDPQNLKPTLETKSIDRLYFAGQINGTTGYEEAGVQGLLAGTNAALVTCENSEFDVWTPRRDEAYLGVLVDDLITHGTTEPYRMFTSRAEYRLLLREDNADQRLTETGRKLGLVDDVRWQAYEEKMEAIASETSRLKDIWATPINALGAQVTAQTGEVLSKESTAYDLLKRPQIHFNDIAAITGSEVDSQVGEQIEISVKYAGYIDRQQEDIDQMKRLENTALPMDFDYSVVSGLSNEIVQKLAQVRPSTLAQAGRISGVTPAAIQLLAMTVKKQKKVQAALNAS.

Position 13–18 (glycine 13–glycine 18) interacts with FAD. Glycine 273 to phenylalanine 287 lines the NAD(+) pocket.

The protein belongs to the MnmG family. As to quaternary structure, homodimer. Heterotetramer of two MnmE and two MnmG subunits. It depends on FAD as a cofactor.

The protein localises to the cytoplasm. Its function is as follows. NAD-binding protein involved in the addition of a carboxymethylaminomethyl (cmnm) group at the wobble position (U34) of certain tRNAs, forming tRNA-cmnm(5)s(2)U34. This Psychrobacter arcticus (strain DSM 17307 / VKM B-2377 / 273-4) protein is tRNA uridine 5-carboxymethylaminomethyl modification enzyme MnmG.